The primary structure comprises 585 residues: Parathyroid hormone/parathyroid hormone-related peptide receptor (585 aa).

An N-terminal signal peptide occupies residues 1–26; that stretch reads MGAARIAPGLALLLCCPVLSSAYALV. At 27-184 the chain is on the extracellular side; the sequence is DADDVMTKEE…REREVFDRLG (158 aa). Disulfide bonds link cysteine 48/cysteine 113, cysteine 104/cysteine 144, and cysteine 127/cysteine 166. The disordered stretch occupies residues 66 to 100; that stretch reads DKGWASAPTSGKPRKEKASGKLYPESGEDTGSRHQ. Residues asparagine 147, asparagine 157, asparagine 162, and asparagine 172 are each glycosylated (N-linked (GlcNAc...) asparagine). A helical membrane pass occupies residues 185–208; it reads MIYTVGYSVSLASLTVAVLILAYF. At 209 to 215 the chain is on the cytoplasmic side; the sequence is RRLHCTR. The helical transmembrane segment at 216 to 235 threads the bilayer; sequence NYIHMHLFLSFMLRAVSIFV. The Extracellular portion of the chain corresponds to 236-277; it reads KDAVLYSGATLDEAERLTEEELRAIAQAPLPPVAATSYVGCR. Residues 278–301 form a helical membrane-spanning segment; the sequence is VAVTFFLYFLATNYYWILVEGLYL. Over 302 to 315 the chain is Cytoplasmic; that stretch reads HSLIFMAFFSEKKY. The chain crosses the membrane as a helical span at residues 316–337; that stretch reads LWGFTVFGWGLPAIFVAVWVSV. The Extracellular segment spans residues 338–356; the sequence is RATLANTGCWDLSSGNKKW. Residues 357 to 377 form a helical membrane-spanning segment; that stretch reads IIQVPILASIVLNFILFINIV. The Cytoplasmic segment spans residues 378–404; that stretch reads RVLATKLRETNAGRCDTRQQYRKLLKS. The helical transmembrane segment at 405-423 threads the bilayer; that stretch reads TLVLMPLFGVHYIVFMATP. The Extracellular segment spans residues 424–435; sequence YTEVSGTLWQVQ. A helical transmembrane segment spans residues 436–458; sequence MHYEMLFNSFQGFFVAIIYCFCN. Residues 459–585 are Cytoplasmic-facing; the sequence is GEVQAEIKKS…LLQEEWETVM (127 aa). An Important for interaction with G proteins motif is present at residues 469-472; sequence WSRW. Threonine 543 is modified (phosphothreonine).

This sequence belongs to the G-protein coupled receptor 2 family. As to quaternary structure, homodimer in the absence of bound ligand. Peptide hormone binding leads to dissociation of the homodimer. In terms of processing, N-glycosylated.

Its subcellular location is the cell membrane. Its function is as follows. G-protein-coupled receptor for parathyroid hormone (PTH) and for parathyroid hormone-related peptide (PTHLH). Ligand binding causes a conformation change that triggers signaling via guanine nucleotide-binding proteins (G proteins) and modulates the activity of downstream effectors, such as adenylate cyclase (cAMP). PTH1R is coupled to G(s) G alpha proteins and mediates activation of adenylate cyclase activity. PTHLH dissociates from PTH1R more rapidly than PTH; as consequence, the cAMP response induced by PTHLH decays faster than the response induced by PTH. The protein is Parathyroid hormone/parathyroid hormone-related peptide receptor (PTH1R) of Sus scrofa (Pig).